The following is a 372-amino-acid chain: MPNQHMLLLFNLLPVGSNISIWWNFGSMLLTCLALQTMTGFFLAIHYTANINLAFSSIVHITRDVPYGWMMQNLHAIGASMFFICIYIHIARGLYYGSFLNKNVWLSGTTLLIILMATAFFGYVLPWGQMSFWAATVITNLLTAVPYIGTELTNWLWGGFSINDPTLTRFFALHFILPFTIISMSSIHIMLLHTEGSSNPLGTNSDIDKIPFHPYHSHKDMLMFTIMITMLFIIMSFTPNIFNDPENFSKANPLVTPQHIKPEWYFLFAYGILRSIPNKLGGTVALVLSVTILLTMPFTHTSHMRSMTFRPLMQFMFWTLVATFITITWAATKPVEPPFTSIGQVTAILYFLFFTMNPLLGWLENKISMTNT.

The next 4 membrane-spanning stretches (helical) occupy residues 25–45 (FGSM…FLAI), 69–90 (WMMQ…YIHI), 105–125 (WLSG…GYVL), and 170–190 (FFAL…IHIM). Heme b contacts are provided by His75 and His89. Heme b contacts are provided by His174 and His188. His193 lines the a ubiquinone pocket. Transmembrane regions (helical) follow at residues 218–238 (HKDM…MSFT), 280–300 (LGGT…PFTH), 312–332 (LMQF…WAAT), and 339–358 (FTSI…TMNP).

The protein belongs to the cytochrome b family. In terms of assembly, the cytochrome bc1 complex contains 3 respiratory subunits (MT-CYB, CYC1 and UQCRFS1), 2 core proteins (UQCRC1 and UQCRC2) and probably 6 low-molecular weight proteins. Heme b serves as cofactor.

The protein localises to the mitochondrion inner membrane. Functionally, component of the ubiquinol-cytochrome c reductase complex (complex III or cytochrome b-c1 complex) that is part of the mitochondrial respiratory chain. The b-c1 complex mediates electron transfer from ubiquinol to cytochrome c. Contributes to the generation of a proton gradient across the mitochondrial membrane that is then used for ATP synthesis. The protein is Cytochrome b (MT-CYB) of Pantherophis vulpinus (Western fox snake).